Here is a 259-residue protein sequence, read N- to C-terminus: Ribonuclease HII (259 aa).

Positions 70 to 258 (TLIAGIDEVG…VKSLVLGKKE (189 aa)) constitute an RNase H type-2 domain. A divalent metal cation contacts are provided by Asp76, Glu77, and Asp168.

This sequence belongs to the RNase HII family. It depends on Mn(2+) as a cofactor. Requires Mg(2+) as cofactor.

The protein resides in the cytoplasm. The catalysed reaction is Endonucleolytic cleavage to 5'-phosphomonoester.. Functionally, endonuclease that specifically degrades the RNA of RNA-DNA hybrids. In Streptococcus pneumoniae serotype 19F (strain G54), this protein is Ribonuclease HII.